The following is a 351-amino-acid chain: Phosphate acyltransferase (351 aa).

This sequence belongs to the PlsX family. As to quaternary structure, homodimer. Probably interacts with PlsY.

The protein localises to the cytoplasm. The enzyme catalyses a fatty acyl-[ACP] + phosphate = an acyl phosphate + holo-[ACP]. Its pathway is lipid metabolism; phospholipid metabolism. Functionally, catalyzes the reversible formation of acyl-phosphate (acyl-PO(4)) from acyl-[acyl-carrier-protein] (acyl-ACP). This enzyme utilizes acyl-ACP as fatty acyl donor, but not acyl-CoA. This is Phosphate acyltransferase from Paramagnetospirillum magneticum (strain ATCC 700264 / AMB-1) (Magnetospirillum magneticum).